The chain runs to 397 residues: Staphylopine export protein (397 aa).

12 helical membrane passes run 12-32 (LYIL…FIPL), 38-58 (GATN…AMVF), 77-97 (IILI…LEGY), 102-122 (VMQG…IIDA), 134-154 (LYSL…VGIW), 158-178 (NISL…FFGY), 217-237 (GIIM…VPLY), 239-259 (VSLG…AVVA), 285-305 (LLVI…IIFY), 309-329 (ILIG…LSFV), 337-357 (MLLG…GALM), and 363-383 (LVGF…IMIM).

This sequence belongs to the major facilitator superfamily.

It is found in the cell membrane. Involved in the export of the metallophore staphylopine. The chain is Staphylopine export protein from Staphylococcus aureus (strain Mu50 / ATCC 700699).